Consider the following 197-residue polypeptide: dITP/XTP pyrophosphatase (197 aa).

Position 8-13 (8-13) interacts with substrate; it reads TGNAGK. The Mg(2+) site is built by Glu-40 and Asp-69. Residue Asp-69 is the Proton acceptor of the active site. Substrate-binding positions include Ser-70, 154–157, Lys-177, and 182–183; these read FGYD and HR.

This sequence belongs to the HAM1 NTPase family. In terms of assembly, homodimer. It depends on Mg(2+) as a cofactor.

It catalyses the reaction XTP + H2O = XMP + diphosphate + H(+). It carries out the reaction dITP + H2O = dIMP + diphosphate + H(+). The catalysed reaction is ITP + H2O = IMP + diphosphate + H(+). Functionally, pyrophosphatase that catalyzes the hydrolysis of nucleoside triphosphates to their monophosphate derivatives, with a high preference for the non-canonical purine nucleotides XTP (xanthosine triphosphate), dITP (deoxyinosine triphosphate) and ITP. Seems to function as a house-cleaning enzyme that removes non-canonical purine nucleotides from the nucleotide pool, thus preventing their incorporation into DNA/RNA and avoiding chromosomal lesions. This is dITP/XTP pyrophosphatase (rdgB) from Salmonella paratyphi A (strain ATCC 9150 / SARB42).